The chain runs to 651 residues: Crossover junction endonuclease MUS81 (651 aa).

Residues 99–124 are disordered; sequence RKHEVSDTSNLPDAKPKKQRKQKQYI. The span at 115–124 shows a compositional bias: basic residues; sequence KKQRKQKQYI. The ERCC4 domain occupies 361-458; it reads ILIIDNREIR…QFYYLVEDVV (98 aa).

Belongs to the XPF family. As to quaternary structure, interacts with EME1. Requires Mg(2+) as cofactor.

It localises to the nucleus. Its function is as follows. Interacts with EME1 to form a DNA structure-specific endonuclease with substrate preference for branched DNA structures with a 5'-end at the branch nick. Typical substrates include 3'-flap structures, D-loops, replication forks and nicked Holliday junctions. May be required in mitosis for the processing of stalled or collapsed replication fork intermediates. May be required in meiosis for the repair of meiosis-specific double strand breaks subsequent to single-end invasion (SEI). The sequence is that of Crossover junction endonuclease MUS81 (MUS81) from Debaryomyces hansenii (strain ATCC 36239 / CBS 767 / BCRC 21394 / JCM 1990 / NBRC 0083 / IGC 2968) (Yeast).